Consider the following 670-residue polypeptide: Penicillin-binding protein activator LpoA (670 aa).

Positions 1–26 (MLPSKVVHRKAVRTVPLLLAALIFAG) are cleaved as a signal peptide. The N-palmitoyl cysteine moiety is linked to residue Cys27. Residue Cys27 is the site of S-diacylglycerol cysteine attachment.

Belongs to the LpoA family. As to quaternary structure, interacts with PBP1a.

It localises to the cell outer membrane. Functionally, regulator of peptidoglycan synthesis that is essential for the function of penicillin-binding protein 1A (PBP1a). The polypeptide is Penicillin-binding protein activator LpoA (Erwinia tasmaniensis (strain DSM 17950 / CFBP 7177 / CIP 109463 / NCPPB 4357 / Et1/99)).